A 288-amino-acid polypeptide reads, in one-letter code: Pyridoxal kinase PdxY (288 aa).

Residues S12 and 47–48 (TQ) each bind substrate. ATP is bound by residues D114, E151, K184, and 211–214 (RPLL). D225 lines the substrate pocket.

Belongs to the pyridoxine kinase family. PdxY subfamily. In terms of assembly, homodimer. The cofactor is Mg(2+).

The catalysed reaction is pyridoxal + ATP = pyridoxal 5'-phosphate + ADP + H(+). It functions in the pathway cofactor metabolism; pyridoxal 5'-phosphate salvage; pyridoxal 5'-phosphate from pyridoxal: step 1/1. Functionally, pyridoxal kinase involved in the salvage pathway of pyridoxal 5'-phosphate (PLP). Catalyzes the phosphorylation of pyridoxal to PLP. The protein is Pyridoxal kinase PdxY of Pseudomonas aeruginosa (strain UCBPP-PA14).